Reading from the N-terminus, the 579-residue chain is Cyclin-T1-5 (579 aa).

Disordered stretches follow at residues 1-27 (MAGV…HEKQ) and 271-419 (RVPA…GDAL). A compositionally biased stretch (polar residues) spans 11–20 (YSESGVSSHS). Positions 274-283 (ASQGSEVESS) are enriched in low complexity. A compositionally biased stretch (polar residues) spans 306 to 334 (SRQTSSVRSTHEQSNSDNHGGSSKGVLNQ). Basic and acidic residues-rich tracts occupy residues 349–380 (DNKE…EAPH) and 389–414 (PGKD…RNVD). At Ser-423 the chain carries Phosphoserine. 3 stretches are compositionally biased toward basic and acidic residues: residues 474-512 (DEKT…KNTE), 538-556 (KQSE…ESHK), and 563-579 (HHGD…NNHS). Positions 474–579 (DEKTKERKVQ…RRHSQENNHS (106 aa)) are disordered.

This sequence belongs to the cyclin family. Cyclin T subfamily.

The protein is Cyclin-T1-5 (CYCT1-5) of Arabidopsis thaliana (Mouse-ear cress).